A 330-amino-acid chain; its full sequence is MKKSFIHQQEEISFVKNTFTQYLIAKLDVVEVQGPILSRVGDGMQDNLSGTENPVSVNVLKIPNATFEVVHSLAKWKRHTLARFGFNEGEGLVVNMKALRPDEDSLDQTHSVYVDQWDWEKVIPDGKRNLAYLKETVETIYKVIRLTELAVEARYDIEAVLPKKITFIHTEELVAKYPDLTPKERENAITKEFGAVFLIGIGGVLPDGKPHDGRAPDYDDWTTETENGYHGLNGDILVWNDQLGSAFELSSMGIRVDEEALKRQVEMTGDQDRLGFDWHKSLLNGLFPLTIGGGIGQSRMVMFLLRKQHIGEVQTSVWPQEVRDSYDNIL.

The protein belongs to the class-II aminoacyl-tRNA synthetase family. AsnA subfamily.

Its subcellular location is the cytoplasm. It carries out the reaction L-aspartate + NH4(+) + ATP = L-asparagine + AMP + diphosphate + H(+). The protein operates within amino-acid biosynthesis; L-asparagine biosynthesis; L-asparagine from L-aspartate (ammonia route): step 1/1. The chain is Aspartate--ammonia ligase from Streptococcus pyogenes serotype M1.